The primary structure comprises 145 residues: D-aminoacyl-tRNA deacylase (145 aa).

The Gly-cisPro motif, important for rejection of L-amino acids signature appears at 137–138 (GP).

This sequence belongs to the DTD family. In terms of assembly, homodimer.

The protein localises to the cytoplasm. It carries out the reaction glycyl-tRNA(Ala) + H2O = tRNA(Ala) + glycine + H(+). It catalyses the reaction a D-aminoacyl-tRNA + H2O = a tRNA + a D-alpha-amino acid + H(+). Its function is as follows. An aminoacyl-tRNA editing enzyme that deacylates mischarged D-aminoacyl-tRNAs. Also deacylates mischarged glycyl-tRNA(Ala), protecting cells against glycine mischarging by AlaRS. Acts via tRNA-based rather than protein-based catalysis; rejects L-amino acids rather than detecting D-amino acids in the active site. By recycling D-aminoacyl-tRNA to D-amino acids and free tRNA molecules, this enzyme counteracts the toxicity associated with the formation of D-aminoacyl-tRNA entities in vivo and helps enforce protein L-homochirality. The polypeptide is D-aminoacyl-tRNA deacylase (Photorhabdus laumondii subsp. laumondii (strain DSM 15139 / CIP 105565 / TT01) (Photorhabdus luminescens subsp. laumondii)).